The following is a 227-amino-acid chain: Orotidine 5'-phosphate decarboxylase (227 aa).

Residues Asp-8, Lys-30, 57–66 (DLKFHDIPNT), Thr-116, Arg-177, Gln-186, Gly-206, and Arg-207 each bind substrate. Catalysis depends on Lys-59, which acts as the Proton donor.

Belongs to the OMP decarboxylase family. Type 1 subfamily. As to quaternary structure, homodimer.

The enzyme catalyses orotidine 5'-phosphate + H(+) = UMP + CO2. Its pathway is pyrimidine metabolism; UMP biosynthesis via de novo pathway; UMP from orotate: step 2/2. In terms of biological role, catalyzes the decarboxylation of orotidine 5'-monophosphate (OMP) to uridine 5'-monophosphate (UMP). This is Orotidine 5'-phosphate decarboxylase from Acinetobacter baylyi (strain ATCC 33305 / BD413 / ADP1).